The chain runs to 189 residues: Keratin-associated protein 5-2 (189 aa).

8 repeat units span residues 21-24 (CCKP), 27-30 (CCKP), 33-36 (CCVP), 134-137 (CCKP), 144-147 (CCKP), 159-162 (CCKP), 169-172 (CCKP), and 179-182 (CCAP). The interval 27-182 (CCKPVCCCVP…CCCQSSCCAP (156 aa)) is 8 X 4 AA repeats of C-C-X-P.

It belongs to the KRTAP type 5 family. As to quaternary structure, interacts with hair keratins.

In terms of biological role, in the hair cortex, hair keratin intermediate filaments are embedded in an interfilamentous matrix, consisting of hair keratin-associated protein (KRTAP), which are essential for the formation of a rigid and resistant hair shaft through their extensive disulfide bond cross-linking with abundant cysteine residues of hair keratins. The matrix proteins include the high-sulfur and high-glycine-tyrosine keratins. The chain is Keratin-associated protein 5-2 from Mus musculus (Mouse).